The sequence spans 456 residues: Tyrosine phenol-lyase (456 aa).

Lys257 carries the post-translational modification N6-(pyridoxal phosphate)lysine.

The protein belongs to the beta-eliminating lyase family. Homotetramer. Pyridoxal 5'-phosphate serves as cofactor.

The enzyme catalyses L-tyrosine + H2O = phenol + pyruvate + NH4(+). This chain is Tyrosine phenol-lyase (tpl), found in Citrobacter intermedius (Escherichia intermedia).